The sequence spans 488 residues: Capsid protein (488 aa).

The segment at 79–142 (ETSEDESDSG…TQPKTIPGQK (64 aa)) is disordered. The segment covering 80 to 93 (TSEDESDSGEEPEF) has biased composition (acidic residues). Residues 94–130 (EQVRMDRTGGTEIPKKEDGAEPSRYNERKRKTTEDRY) are compositionally biased toward basic and acidic residues. The short motif at 121–124 (RKRK) is the Nuclear localization signal element. The CCHC-type; degenerate zinc-finger motif lies at 411–428 (CRCWISNIEGHYANECPN). The segment at 464 to 488 (YKEEEEETSTEESDGSSTSEDSDSD) is disordered. Acidic residues predominate over residues 465–488 (KEEEEETSTEESDGSSTSEDSDSD).

This sequence belongs to the caulimoviridae capsid protein family. In terms of assembly, interacts (via nuclear localization signal) with host importin alpha.

Its subcellular location is the virion. It localises to the host nucleus. Its function is as follows. Self assembles to form an icosahedral capsid, about 50 nm in diameter, nm, composed of 420 subunits of the viral capsid protein. The capsid encapsulates the genomic dsDNA. Following virus entry into host cell, provides nuclear import of the viral genome. Virus particles do not enter the nucleus, but dock at the nuclear membrane through the interaction with host importins. This is Capsid protein from Arabidopsis thaliana (Mouse-ear cress).